A 497-amino-acid chain; its full sequence is Acetyltransferase adrJ (497 aa).

Catalysis depends on proton acceptor residues His174 and Asp422. A disordered region spans residues 430 to 451 (SSAQSSSQNTQKKGKPSYVNGV).

The protein belongs to the plant acyltransferase family. In terms of assembly, monomer.

Its pathway is secondary metabolite biosynthesis; terpenoid biosynthesis. Acetyltransferase; part of the gene cluster that mediates the biosynthesis of andrastins, meroterpenoid compounds that exhibit inhibitory activity against ras farnesyltransferase, suggesting that they could be promising leads for antitumor agents. The first step of the pathway is the synthesis of 3,5-dimethylorsellinic acid (DMOA) by the polyketide synthase adrD via condensation of one acetyl-CoA starter unit with 3 malonyl-CoA units and 2 methylations. DMAO is then converted to farnesyl-DMAO by the prenyltransferase adrG. The methyltransferase adrK catalyzes the methylation of the carboxyl group of farnesyl-DMAO to farnesyl-DMAO methyl ester which is further converted to epoxyfarnesyl-DMAO methyl ester by the FAD-dependent monooxygenase adrH. The terpene cyclase adrI then catalyzes the carbon skeletal rearrangement to generate the andrastin E, the first compound in the pathway having the andrastin scaffold, with the tetracyclic ring system. The post-cyclization tailoring enzymes adrF, adrE, adrJ, and adrA, are involved in the conversion of andrastin E into andrastin A. The short chain dehydrogenase adrF is responsible for the oxidation of the C-3 a hydroxyl group of andrastin E to yield the corresponding ketone, andrastin D. The ketoreductase adrE stereoselectively reduces the carbonyl moiety to reverse the stereochemistry of the C-3 position to yield andrastin F. The acetyltransferase adrJ is the acetyltransferase that attaches the acetyl group to the C-3 hydroxyl group of andrastin F to yield andrastin C. Finally, the cytochrome P450 monooxygenase adrA catalyzes two sequential oxidation reactions of the C-23 methyl group, to generate the corresponding alcohol andrastin B, and aldehyde andrastin A. This chain is Acetyltransferase adrJ, found in Penicillium rubens (strain ATCC 28089 / DSM 1075 / NRRL 1951 / Wisconsin 54-1255) (Penicillium chrysogenum).